The chain runs to 321 residues: Malate dehydrogenase (321 aa).

Residues 13–18 (GAGNIG) and D38 contribute to the NAD(+) site. Positions 87 and 93 each coordinate substrate. Residues N100 and 123 to 125 (VTN) contribute to the NAD(+) site. 2 residues coordinate substrate: N125 and R156. H180 acts as the Proton acceptor in catalysis.

Belongs to the LDH/MDH superfamily. MDH type 3 family.

The enzyme catalyses (S)-malate + NAD(+) = oxaloacetate + NADH + H(+). Functionally, catalyzes the reversible oxidation of malate to oxaloacetate. The protein is Malate dehydrogenase of Anaplasma phagocytophilum (strain HZ).